The following is a 1416-amino-acid chain: MTAPEIGCAEAIPLSKSQQNLYNGVLQDNDPALYLIGKRYRFHPLALSNFLAALEASVLNNPVQLCVLQMAATDADYPQLVPRLQFSDLVLVRSAAQGQPDGPGADLEHTWSSGILDRPLVRYTVSTDEGGNVCGLDVHTHHILLDGGATGIIEADLAHFLAASLEPAGVGQMPTLSQGLAKLAAAHLRETAKVAEALRRQADAVQRELTAEAGQGGGAQGASGTSGAAAKGVLQESIALCGPAYDALRALSEAQQVPLNVLVAAAAVAVQAGLRQSTESLLVHAVDNRFGDPELNVATCLVNSVAHALRFRPFASVREVVRDLDRGYVKAVRRRWIREEHYRRMYLAINRTSHVQALTLNFIRESCAPGLRPFLSEAPVATEIGPIEGTTVACVLDEQRHTLNLAIWDRADLPERNTGAGVAARIGAALESMAALWDQPIAMTANEWFEVGADGLPCRTEAAGRPRPPSAPAWFVDAAPGLRQFLDRRRHVYPWVGWLVCHGVVPGDVLVCTDDDTDKTVDLLLACHLAGCGYSMCESVDDLSLRATTIGEHCEGSSAHPVDVAAVRLGAVPDHALRERIDQRLDQVARDPLLATKAAYIMPTSGTTGQPKLVRISHGSLAAFCAAIGPSYGWNSRDTILQCAPLTSDISVEEIFGAAVCGAELVRSAAMKTGDLGGLARDIHALGPTVVDLPTAVWHLLCEDGDAVDVIGRSRLRQIVIGGESIRTSTVDKWVNSPVLAPISLVSSYGPTEATVVATHLPIVYDGIAAAAHTRLRVGLPMAPNTVFIAFGEVVIAGPLVSDGYLGIDDSSFGAVAPGDGSQLRAFATADRVTIDEEGFPVFAGRKDTIVKVAGKRVDTAAVARRISADPTVCDVAVEPHDGRLGVWFETERTREAAEDGATAGRIGLTLASLGVPAFFVVAVPSIPRKPNGKVDGARLHTLPQLADAVPSDAEAGESAAGLARVWSRHLGRPLAADSSLLGAGIGSLDLIRILPDTRRYLGRHLSVLELISADTAANLVCDLGSNPAAPATDGWLDAETAAAIERDLVSLGSQCTPQPLGAKPPPHDRAAAPIVVLGASGIVGTGFARAVLERKQAGLACPEIVLASRSKPPEHGPWSALRGLEGIRIEQLGATLGAADLDALICDTGARSLINCIGNTNVLVPYRGLRAANVELVSTVAQVCAQRDVRLVHLSTFVISADVTAPRVTDPRMSPYPYAASKSLAELIVAASSPALDFTIVRLPRVLGEDYQLRESADILVSVVDACMALRAFPTLTLTEEVTTGRAAAQAILGLLPQFSGAAGLGHGITVVRGAAVQYRELLSGYALDEIDAAEWKHRLDQSDWARRNPQRWSVVDAWVSLGMRLGARSYSQYLAGYPSIPLQVGTVAEIAAPPTALRALLEQGCAQPPRPALA.

The stretch at 188-215 forms a coiled coil; the sequence is LRETAKVAEALRRQADAVQRELTAEAGQ. Positions 965–1028 constitute a Carrier domain; it reads RVWSRHLGRP…NLVCDLGSNP (64 aa). An O-(pantetheine 4'-phosphoryl)serine modification is found at S988.

It belongs to the ATP-dependent AMP-binding enzyme family. Pantetheine 4'-phosphate serves as cofactor.

It carries out the reaction 2 a (3R)-3-isocyanyl-fatty acyl-[ACP] + L-lysine + ATP + 2 NADPH = an isonitrile lipopeptide + 2 holo-[ACP] + AMP + diphosphate + 2 NADP(+). Its function is as follows. Nonribosomal peptide synthetase (NRPS) involved in the biosynthesis of a unique class of isonitrile lipopeptides (INLPs) that seem to play a role in metal acquisition in M.marinum. Catalyzes the final step in the pathway, i.e. the condensation of a (3R)-3-isocyanyl-fatty acyl-[ACP] to both amino groups of a lysine, producing isonitrile lipopeptides. The chain is Isonitrile lipopeptide synthase from Mycobacterium marinum (strain ATCC BAA-535 / M).